The sequence spans 357 residues: Glucose-6-phosphatase catalytic subunit 1 (357 aa).

At 1–28 the chain is on the lumenal side; sequence MEKGMNVLHDFGIQSTHYLQVNYQDSQD. The helical transmembrane segment at 29–49 threads the bilayer; it reads WFILVSVIADLRNAFYVLFPI. Residues 50–60 lie on the Cytoplasmic side of the membrane; the sequence is WFHLREAVGIK. Residues 61–81 traverse the membrane as a helical segment; the sequence is LLWVAVIGDWLNLVFKWILFG. Topologically, residues 82-117 are lumenal; sequence QRPYWWVMDTDYYSNASVPLIKQFPVTCETGPGSPS. R83 is a binding site for substrate. A glycan (N-linked (GlcNAc...) asparagine) is linked at N96. Residues 118–138 form a helical membrane-spanning segment; sequence GHAMGTAGVYYVMVTSTLSMF. Catalysis depends on H119, which acts as the Proton donor. Topologically, residues 139–147 are cytoplasmic; sequence RGKKKPTYR. A helical membrane pass occupies residues 148–168; that stretch reads FRCLNVILWLGFWAVQLNVCL. The Lumenal portion of the chain corresponds to 169–170; the sequence is SR. R170 contacts substrate. A helical transmembrane segment spans residues 171–191; sequence IYLAAHFPHQVVAGVLSGIAV. The active-site Nucleophile is H176. The Cytoplasmic portion of the chain corresponds to 192–209; it reads AETFRHIQSIYNASLKKY. Residues 210 to 230 form a helical membrane-spanning segment; sequence FFITFFLLSFAIGFYLLLKGL. Topologically, residues 231-254 are lumenal; sequence GVDLLWTLEKARRWCERPEWVHID. The helical transmembrane segment at 255-275 threads the bilayer; it reads TTPFASLLKNVGTLFGLGLAL. The Cytoplasmic portion of the chain corresponds to 276 to 291; the sequence is NSSMYRESCKGTLSKW. The helical transmembrane segment at 292–312 threads the bilayer; the sequence is FPFRLSCIVVSLILLHLFDSL. Over 313–320 the chain is Lumenal; the sequence is KPPSQIEL. A helical membrane pass occupies residues 321–341; that stretch reads IFYVLSFCKSAAVPLASVSLI. The Cytoplasmic portion of the chain corresponds to 342–357; that stretch reads PYCLARVLGQPDKKSL. The short motif at 354 to 357 is the Prevents secretion from ER element; sequence KKSL.

This sequence belongs to the glucose-6-phosphatase family.

Its subcellular location is the endoplasmic reticulum membrane. It carries out the reaction D-glucose 6-phosphate + H2O = D-glucose + phosphate. The protein operates within carbohydrate biosynthesis; gluconeogenesis. Hydrolyzes glucose-6-phosphate to glucose in the endoplasmic reticulum. Forms with the glucose-6-phosphate transporter (SLC37A4/G6PT) the complex responsible for glucose production in the terminal step of glycogenolysis and gluconeogenesis. Hence, it is the key enzyme in homeostatic regulation of blood glucose levels. The sequence is that of Glucose-6-phosphatase catalytic subunit 1 (G6PC1) from Felis catus (Cat).